Here is a 398-residue protein sequence, read N- to C-terminus: KiSS-1 receptor (398 aa).

Topologically, residues 1 to 46 are extracellular; it reads MHTVATSGPNASWGAPANASGCPGCGANASDGPVPSPRAVDAWLVP. N-linked (GlcNAc...) asparagine glycosylation is found at asparagine 10, asparagine 18, and asparagine 28. The chain crosses the membrane as a helical span at residues 47–67; sequence LFFAALMLLGLVGNSLVIYVI. The Cytoplasmic portion of the chain corresponds to 68 to 78; sequence CRHKPMRTVTN. The chain crosses the membrane as a helical span at residues 79–101; it reads FYIANLAATDVTFLLCCVPFTAL. At 102–120 the chain is on the extracellular side; it reads LYPLPGWVLGDFMCKFVNY. Cysteines 115 and 191 form a disulfide. A helical transmembrane segment spans residues 121 to 138; the sequence is IQQVSVQATCATLTAMSV. Topologically, residues 139–157 are cytoplasmic; it reads DRWYVTVFPLRALHRRTPR. The chain crosses the membrane as a helical span at residues 158–178; it reads LALAVSLSIWVGSAAVSAPVL. The Extracellular portion of the chain corresponds to 179-202; that stretch reads ALHRLSPGPRAYCSEAFPSRALER. Residues 203-223 traverse the membrane as a helical segment; the sequence is AFALYNLLALYLLPLLATCAC. Residues 224–263 are Cytoplasmic-facing; it reads YAAMLRHLGRVAVRPAPADSALQGQVLAERAGAVRAKVSR. The helical transmembrane segment at 264–284 threads the bilayer; it reads LVAAVVLLFAACWGPIQLFLV. Over 285–305 the chain is Extracellular; it reads LQALGPAGSWHPRSYAAYALK. A helical membrane pass occupies residues 306-328; that stretch reads TWAHCMSYSNSALNPLLYAFLGS. At 329–398 the chain is on the cytoplasmic side; the sequence is HFRQAFRRVC…CVLGEDNAPL (70 aa). Residues 341-363 are disordered; that stretch reads APRRPRRPRRPGPSDPAAPHAEL.

The protein belongs to the G-protein coupled receptor 1 family. In terms of tissue distribution, most highly expressed in the pancreas, placenta and spinal cord, with lower-level of expression in peripheral blood leukocytes, kidney, lung, fetal liver, stomach, small intestine, testes, spleen, thymus, adrenal glands and lymph nodes. In the adult brain, expressed in the superior frontal gyrus, putamen, caudate nucleus, cingulate gyrus, nucleus accumbens, hippocampus, pons and amygdala, as well as the hypothalamus and pituitary. Expression levels are higher in early (7-9 weeks) than term placentas. Expression levels were increased in both early placentas and molar pregnancies and were reduced in choriocarcinoma cells. Expressed at higher levels in first trimester trophoblasts than at term of gestation. Also found in the extravillous trophoblast suggesting endocrine/paracrine activation mechanism.

The protein localises to the cell membrane. Receptor for metastin (kisspeptin-54 or kp-54), a C-terminally amidated peptide of KiSS1. KiSS1 is a metastasis suppressor protein that suppresses metastases in malignant melanomas and in some breast carcinomas without affecting tumorigenicity. The metastasis suppressor properties may be mediated in part by cell cycle arrest and induction of apoptosis in malignant cells. The receptor is essential for normal gonadotropin-released hormone physiology and for puberty. The hypothalamic KiSS1/KISS1R system is a pivotal factor in central regulation of the gonadotropic axis at puberty and in adulthood. The receptor is also probably involved in the regulation and fine-tuning of trophoblast invasion generated by the trophoblast itself. Analysis of the transduction pathways activated by the receptor identifies coupling to phospholipase C and intracellular calcium release through pertussis toxin-insensitive G(q) proteins. The chain is KiSS-1 receptor (KISS1R) from Homo sapiens (Human).